A 338-amino-acid chain; its full sequence is Ketol-acid reductoisomerase (NADP(+)) (338 aa).

The 181-residue stretch at 1-181 folds into the KARI N-terminal Rossmann domain; it reads MNVYYDKDCD…GGGRSGIIET (181 aa). Residues 24–27, Arg-47, Ser-50, Ser-52, and 82–85 contribute to the NADP(+) site; these read YGSQ and DEFQ. His-107 is a catalytic residue. Gly-133 is a binding site for NADP(+). The KARI C-terminal knotted domain occupies 182-327; it reads TFKDETETDL…AKLRGMMPWI (146 aa). Asp-190, Glu-194, Glu-226, and Glu-230 together coordinate Mg(2+). Ser-251 serves as a coordination point for substrate.

The protein belongs to the ketol-acid reductoisomerase family. Requires Mg(2+) as cofactor.

It carries out the reaction (2R)-2,3-dihydroxy-3-methylbutanoate + NADP(+) = (2S)-2-acetolactate + NADPH + H(+). The catalysed reaction is (2R,3R)-2,3-dihydroxy-3-methylpentanoate + NADP(+) = (S)-2-ethyl-2-hydroxy-3-oxobutanoate + NADPH + H(+). It functions in the pathway amino-acid biosynthesis; L-isoleucine biosynthesis; L-isoleucine from 2-oxobutanoate: step 2/4. Its pathway is amino-acid biosynthesis; L-valine biosynthesis; L-valine from pyruvate: step 2/4. Its function is as follows. Involved in the biosynthesis of branched-chain amino acids (BCAA). Catalyzes an alkyl-migration followed by a ketol-acid reduction of (S)-2-acetolactate (S2AL) to yield (R)-2,3-dihydroxy-isovalerate. In the isomerase reaction, S2AL is rearranged via a Mg-dependent methyl migration to produce 3-hydroxy-3-methyl-2-ketobutyrate (HMKB). In the reductase reaction, this 2-ketoacid undergoes a metal-dependent reduction by NADPH to yield (R)-2,3-dihydroxy-isovalerate. The sequence is that of Ketol-acid reductoisomerase (NADP(+)) from Psychrobacter cryohalolentis (strain ATCC BAA-1226 / DSM 17306 / VKM B-2378 / K5).